Consider the following 449-residue polypeptide: Tubulin beta-7 chain (449 aa).

GTP is bound by residues Gln-11, Glu-69, Ser-138, Gly-142, Thr-143, Gly-144, Asn-204, and Asn-226. Glu-69 lines the Mg(2+) pocket. The disordered stretch occupies residues 422–449 (YQQYQDATADEEGEYEEEEAEYEQEETY). Residues 429–449 (TADEEGEYEEEEAEYEQEETY) show a composition bias toward acidic residues.

The protein belongs to the tubulin family. Dimer of alpha and beta chains. A typical microtubule is a hollow water-filled tube with an outer diameter of 25 nm and an inner diameter of 15 nM. Alpha-beta heterodimers associate head-to-tail to form protofilaments running lengthwise along the microtubule wall with the beta-tubulin subunit facing the microtubule plus end conferring a structural polarity. Microtubules usually have 13 protofilaments but different protofilament numbers can be found in some organisms and specialized cells. Mg(2+) serves as cofactor.

The protein localises to the cytoplasm. It is found in the cytoskeleton. Its function is as follows. Tubulin is the major constituent of microtubules, a cylinder consisting of laterally associated linear protofilaments composed of alpha- and beta-tubulin heterodimers. Microtubules grow by the addition of GTP-tubulin dimers to the microtubule end, where a stabilizing cap forms. Below the cap, tubulin dimers are in GDP-bound state, owing to GTPase activity of alpha-tubulin. The chain is Tubulin beta-7 chain (TUBB7) from Arabidopsis thaliana (Mouse-ear cress).